The primary structure comprises 563 residues: Chaperonin GroEL 1 (563 aa).

ATP is bound by residues 29–32, 86–90, Gly-413, and Asp-492; these read TIGP and DGTTT. A disordered region spans residues 520-541; the sequence is DKPEPPSAPGAEGGDPMGGMGG. Residues 530 to 541 are compositionally biased toward gly residues; it reads AEGGDPMGGMGG.

The protein belongs to the chaperonin (HSP60) family. As to quaternary structure, forms a cylinder of 14 subunits composed of two heptameric rings stacked back-to-back. Interacts with the co-chaperonin GroES.

It localises to the cytoplasm. It carries out the reaction ATP + H2O + a folded polypeptide = ADP + phosphate + an unfolded polypeptide.. Its function is as follows. Together with its co-chaperonin GroES, plays an essential role in assisting protein folding. The GroEL-GroES system forms a nano-cage that allows encapsulation of the non-native substrate proteins and provides a physical environment optimized to promote and accelerate protein folding. This Prochlorococcus marinus (strain NATL1A) protein is Chaperonin GroEL 1.